The chain runs to 94 residues: Large ribosomal subunit protein uL23 (94 aa).

The protein belongs to the universal ribosomal protein uL23 family. In terms of assembly, part of the 50S ribosomal subunit. Contacts protein L29, and trigger factor when it is bound to the ribosome.

Its function is as follows. One of the early assembly proteins it binds 23S rRNA. One of the proteins that surrounds the polypeptide exit tunnel on the outside of the ribosome. Forms the main docking site for trigger factor binding to the ribosome. This Roseiflexus castenholzii (strain DSM 13941 / HLO8) protein is Large ribosomal subunit protein uL23.